Reading from the N-terminus, the 256-residue chain is Small ribosomal subunit protein uS2 (256 aa).

Residues Asn-104–Leu-149 adopt a coiled-coil conformation.

It belongs to the universal ribosomal protein uS2 family. In terms of assembly, part of the 30S ribosomal subunit. Contacts protein S8.

Spans the head-body hinge region of the 30S subunit. Is loosely associated with the 30S subunit. The polypeptide is Small ribosomal subunit protein uS2 (rpsB) (Thermus thermophilus (strain ATCC BAA-163 / DSM 7039 / HB27)).